The following is a 98-amino-acid chain: Cell division topological specificity factor (98 aa).

The protein belongs to the MinE family.

Its function is as follows. Prevents the cell division inhibition by proteins MinC and MinD at internal division sites while permitting inhibition at polar sites. This ensures cell division at the proper site by restricting the formation of a division septum at the midpoint of the long axis of the cell. The protein is Cell division topological specificity factor of Nitrosomonas europaea (strain ATCC 19718 / CIP 103999 / KCTC 2705 / NBRC 14298).